A 522-amino-acid polypeptide reads, in one-letter code: Probable poly(ADP-ribose) glycohydrolase 2 (522 aa).

It belongs to the poly(ADP-ribose) glycohydrolase family.

The catalysed reaction is [(1''-&gt;2')-ADP-alpha-D-ribose](n) + H2O = [(1''-&gt;2')-ADP-alpha-D-ribose](n-1) + ADP-D-ribose. In terms of biological role, poly(ADP-ribose) synthesized after DNA damage is only present transiently and is rapidly degraded by poly(ADP-ribose) glycohydrolase. This Arabidopsis thaliana (Mouse-ear cress) protein is Probable poly(ADP-ribose) glycohydrolase 2 (PARG2).